The chain runs to 200 residues: Recombination protein RecR (200 aa).

The C4-type zinc finger occupies 57-72 (CRQCRTLTEDELCPQC). Positions 80 to 175 (TLLCVVEGPM…ITSRIAHGVP (96 aa)) constitute a Toprim domain.

Belongs to the RecR family.

In terms of biological role, may play a role in DNA repair. It seems to be involved in an RecBC-independent recombinational process of DNA repair. It may act with RecF and RecO. The chain is Recombination protein RecR from Pseudomonas fluorescens (strain ATCC BAA-477 / NRRL B-23932 / Pf-5).